We begin with the raw amino-acid sequence, 222 residues long: Eukaryotic translation initiation factor 3 subunit K (222 aa).

The PCI domain occupies 46 to 208; the sequence is YDLEANLAVL…KIKTKNITEK (163 aa).

This sequence belongs to the eIF-3 subunit K family. In terms of assembly, component of the eukaryotic translation initiation factor 3 (eIF-3) complex. The eIF-3 complex interacts with pix.

It localises to the cytoplasm. Functionally, component of the eukaryotic translation initiation factor 3 (eIF-3) complex, which is involved in protein synthesis of a specialized repertoire of mRNAs and, together with other initiation factors, stimulates binding of mRNA and methionyl-tRNAi to the 40S ribosome. The eIF-3 complex specifically targets and initiates translation of a subset of mRNAs involved in cell proliferation. The protein is Eukaryotic translation initiation factor 3 subunit K of Drosophila grimshawi (Hawaiian fruit fly).